The primary structure comprises 244 residues: Complement C1q subcomponent subunit A (244 aa).

Residues Met-1–Thr-22 form the signal peptide. Residues Ala-28–Ala-94 are disordered. A Collagen-like domain is found at Gly-31–Ile-109. A 4-hydroxyproline mark is found at Pro-39 and Pro-45. Lys-48 carries the post-translational modification 5-hydroxylysine. The O-linked (Gal...) hydroxylysine glycan is linked to Lys-48. 2 positions are modified to 4-hydroxyproline: Pro-54 and Pro-57. Lys-67 is modified (5-hydroxylysine). The O-linked (Gal...) hydroxylysine glycan is linked to Lys-67. 3 positions are modified to 4-hydroxyproline: Pro-73, Pro-79, and Pro-85. Residues Pro-79–Ala-94 are compositionally biased toward low complexity. Lys-100 carries the post-translational modification 5-hydroxylysine. Residue Lys-100 is glycosylated (O-linked (Gal...) hydroxylysine). Residues Lys-110–Ala-244 form the C1q domain. Asn-146 carries N-linked (GlcNAc...) asparagine glycosylation. Cys-172 and Cys-189 form a disulfide bridge. Gln-198 is a binding site for Ca(2+).

Core component of the complement C1 complex, a calcium-dependent complex composed of 1 molecule of the C1Q subcomplex, 2 molecules of C1R and 2 molecules of C1S. The C1Q subcomplex is composed 18 subunits: 3 chains of C1QA, C1QB, and C1QC trimerize to form 6 collagen-like triple helices connected to six globular ligand-recognition modules (C1q domain). Interacts with CR1 (via Sushi 24 and Sushi 25 domains). Interacts (via C-terminus) with CD33; this interaction activates CD33 inhibitory motifs. O-linked glycans are assumed to be the Glc-Gal disaccharides typically found as secondary modifications of hydroxylated lysines in collagen-like domains.

It is found in the secreted. It localises to the cell surface. With respect to regulation, the C1Q subcomplex is inhibited by sulfated molecules, such as triterpenoid sulfates, heparan sulfate, or chondroitin sulfates. In terms of biological role, core component of the complement C1 complex, a multiprotein complex that initiates the classical pathway of the complement system, a cascade of proteins that leads to phagocytosis and breakdown of pathogens and signaling that strengthens the adaptive immune system. The classical complement pathway is initiated by the C1Q subcomplex of the C1 complex, which specifically binds IgG or IgM immunoglobulins complexed with antigens, forming antigen-antibody complexes on the surface of pathogens: C1QA, together with C1QB and C1QC, specifically recognizes and binds the Fc regions of IgG or IgM via its C1q domain. Immunoglobulin-binding activates the proenzyme C1R, which cleaves C1S, initiating the proteolytic cascade of the complement system. The C1Q subcomplex is activated by a hexamer of IgG complexed with antigens, while it is activated by a pentameric IgM. The C1Q subcomplex also recognizes and binds phosphatidylserine exposed on the surface of cells undergoing programmed cell death, possibly promoting activation of the complement system. This chain is Complement C1q subcomponent subunit A (C1QA), found in Bos taurus (Bovine).